A 335-amino-acid chain; its full sequence is 4-hydroxythreonine-4-phosphate dehydrogenase (335 aa).

Thr132 is a substrate binding site. His163, His208, and His263 together coordinate a divalent metal cation. Residues Lys271, Asn280, and Arg289 each contribute to the substrate site.

Belongs to the PdxA family. In terms of assembly, homodimer. The cofactor is Zn(2+). It depends on Mg(2+) as a cofactor. Requires Co(2+) as cofactor.

Its subcellular location is the cytoplasm. It carries out the reaction 4-(phosphooxy)-L-threonine + NAD(+) = 3-amino-2-oxopropyl phosphate + CO2 + NADH. It functions in the pathway cofactor biosynthesis; pyridoxine 5'-phosphate biosynthesis; pyridoxine 5'-phosphate from D-erythrose 4-phosphate: step 4/5. Functionally, catalyzes the NAD(P)-dependent oxidation of 4-(phosphooxy)-L-threonine (HTP) into 2-amino-3-oxo-4-(phosphooxy)butyric acid which spontaneously decarboxylates to form 3-amino-2-oxopropyl phosphate (AHAP). This Zymomonas mobilis subsp. mobilis (strain ATCC 31821 / ZM4 / CP4) protein is 4-hydroxythreonine-4-phosphate dehydrogenase.